A 256-amino-acid polypeptide reads, in one-letter code: MRRQRERKSMPDAVKKVYLIHGWGANRHMFDDLMPRLPATWPVSAVDLPGHGDAPFAQPFDIEAAADAVAAQIDTPADILGWSLGGLVALYLAARHPDKVRSLCLTASFARLTAAEDYPEGLAAPALGKMVGAFRSDYAKHIKQFLQLQLLHTPDADGIIGRILPDLARCGTPSALQEALDAAERADARHLLDKIDVPVLLVFGGKDAITPPRMGEYLHRHLKGSRLVVMEKAAHAPFLSHAEAFAALYRDFVEGV.

One can recognise an AB hydrolase-1 domain in the interval valine 17 to histidine 241. Residues tryptophan 23, serine 83–leucine 84, and phenylalanine 145–glutamine 149 contribute to the substrate site. Serine 83 (nucleophile) is an active-site residue. Catalysis depends on residues aspartate 207 and histidine 235. Histidine 235 contributes to the substrate binding site.

This sequence belongs to the AB hydrolase superfamily. Carboxylesterase BioH family. As to quaternary structure, monomer.

Its subcellular location is the cytoplasm. It carries out the reaction 6-carboxyhexanoyl-[ACP] methyl ester + H2O = 6-carboxyhexanoyl-[ACP] + methanol + H(+). The protein operates within cofactor biosynthesis; biotin biosynthesis. In terms of biological role, the physiological role of BioH is to remove the methyl group introduced by BioC when the pimeloyl moiety is complete. It allows to synthesize pimeloyl-ACP via the fatty acid synthetic pathway through the hydrolysis of the ester bonds of pimeloyl-ACP esters. The protein is Pimeloyl-[acyl-carrier protein] methyl ester esterase of Neisseria meningitidis serogroup C / serotype 2a (strain ATCC 700532 / DSM 15464 / FAM18).